A 100-amino-acid chain; its full sequence is Urease subunit gamma (100 aa).

This sequence belongs to the urease gamma subunit family. As to quaternary structure, heterotrimer of UreA (gamma), UreB (beta) and UreC (alpha) subunits. Three heterotrimers associate to form the active enzyme.

Its subcellular location is the cytoplasm. It carries out the reaction urea + 2 H2O + H(+) = hydrogencarbonate + 2 NH4(+). Its pathway is nitrogen metabolism; urea degradation; CO(2) and NH(3) from urea (urease route): step 1/1. In Roseobacter denitrificans (strain ATCC 33942 / OCh 114) (Erythrobacter sp. (strain OCh 114)), this protein is Urease subunit gamma.